Reading from the N-terminus, the 514-residue chain is Pleiotropic regulator 1 (514 aa).

An N-acetylmethionine modification is found at Met1. Ser119 is modified (phosphoserine). The interval 135 to 160 is disordered; it reads KADANRTAPSGSEYRHPGASDRPQPT. Residue Ser201 is modified to Phosphoserine. 7 WD repeats span residues 202–241, 244–283, 286–325, 328–367, 370–410, 411–449, and 460–499; these read GHLG…LKLS, GHIS…VIRH, GHLS…SVHT, GHTN…TRVT, NHKK…QNLS, GHNA…NFQR, and DSES…TEET. Ser391 carries the post-translational modification Phosphoserine.

Belongs to the WD repeat PRL1/PRL2 family. As to quaternary structure, identified in the spliceosome C complex. Component of the PRP19-CDC5L splicing complex composed of a core complex comprising a homotetramer of PRPF19, CDC5L, PLRG1 and BCAS2, and at least three less stably associated proteins CTNNBL1, CWC15 and HSPA8. Interacts (via its WD40 repeat domain) directly with CDC5L (via its C-terminal); the interaction is required for mRNA splicing but not for spliceosome assembly. Component of the minor spliceosome, which splices U12-type introns. Within this complex, interacts with CRIPT. Also interacts directly in the complex with BCAS2 and PRPF19. Interacts with USB1.

The protein resides in the nucleus. It is found in the nucleus speckle. Its function is as follows. Involved in pre-mRNA splicing as component of the spliceosome. Component of the PRP19-CDC5L complex that forms an integral part of the spliceosome and is required for activating pre-mRNA splicing. As a component of the minor spliceosome, involved in the splicing of U12-type introns in pre-mRNAs. The chain is Pleiotropic regulator 1 (PLRG1) from Homo sapiens (Human).